The primary structure comprises 284 residues: L-ribulose-5-phosphate 3-epimerase UlaE (284 aa).

It belongs to the L-ribulose-5-phosphate 3-epimerase family.

The catalysed reaction is L-ribulose 5-phosphate = L-xylulose 5-phosphate. It participates in cofactor degradation; L-ascorbate degradation; D-xylulose 5-phosphate from L-ascorbate: step 3/4. Functionally, catalyzes the isomerization of L-xylulose-5-phosphate to L-ribulose-5-phosphate. Is involved in the anaerobic L-ascorbate utilization. The protein is L-ribulose-5-phosphate 3-epimerase UlaE of Escherichia coli O139:H28 (strain E24377A / ETEC).